A 203-amino-acid chain; its full sequence is Phosphatidylethanolamine N-methyltransferase (203 aa).

It catalyses the reaction a 1,2-diacyl-sn-glycero-3-phosphoethanolamine + S-adenosyl-L-methionine = a 1,2-diacyl-sn-glycero-3-phospho-N-methylethanolamine + S-adenosyl-L-homocysteine + H(+). It functions in the pathway phospholipid metabolism; phosphatidylcholine biosynthesis. Its function is as follows. This enzyme catalyzes three distinct methylation reactions for converting phosphatidylethanolamine to phosphatidylcholine. The protein is Phosphatidylethanolamine N-methyltransferase (pmtA) of Cereibacter sphaeroides (Rhodobacter sphaeroides).